Reading from the N-terminus, the 63-residue chain is Omega-conotoxin Eu1.6 (63 aa).

The first 21 residues, 1-21 (MGMRMMFTVFLLVVLATTVVS), serve as a signal peptide directing secretion. The propeptide occupies 22–47 (FTSDRAPDGRNAAAKAFGLITPTVRK). Intrachain disulfides connect Cys-49–Cys-55 and Cys-50–Cys-63. Positions 51–53 (SNP) are ser-Xaa-Pro motif, crucial for potent interaction with nAChR.

Belongs to the conotoxin A superfamily. In terms of tissue distribution, expressed by the venom duct.

It localises to the secreted. This amidated peptide potently and teversibly inhibits Cav2.2/CACNA1B. Steady-state inactivation is enhanced at hyperpolarized membrane potentials. Also shows a weak interaction at alpha-3-beta-4/ CHRNA3-CHRNB4 and alpha-7/CHRNA7 nAChRs subtypes. In vivo, exhibits a potent analgesic activity in rat partial sciatic nerve injury and chronic constriction injury models. This Conus eburneus (Ivory cone) protein is Omega-conotoxin Eu1.6.